Reading from the N-terminus, the 68-residue chain is Frenatin-3 (68 aa).

Residues 1–22 (MHFLKKSIFLVLFLGLVSLSIC) form the signal peptide. The propeptide occupies 23 to 46 (EKEKREDQNEEEVDENEEESEEKR). Positions 26–47 (KREDQNEEEVDENEEESEEKRG) are disordered. Positions 30–42 (QNEEEVDENEEES) are enriched in acidic residues.

This sequence belongs to the frog skin active peptide (FSAP) family. Frenatin subfamily. Expressed by the granular skin glands.

It localises to the secreted. Its function is as follows. Antimicrobial peptide with activity against both Gram-positive and Gram-negative bacteria. Antibacterial activities have been tested against Bacillus cereus (MIC=12.5 ug/ml), Escherichia coli (MIC=50 ug/ml), Leuconostoc mesenteroides (MIC=25 ug/ml), Micrococcus luteus (MIC=1.5 ug/ml), Pastewella haemolytica (MIC=0.8 ug/ml), Staphylococcus aureus (MIC&lt;l00 ug/ml), Streptococcus faecalis (MIC&lt;150 ug/ml) and Streptococcus uberis (MIC=50 ug/ml). Strongly inhibits the formation of NO by neuronal nitric oxide synthase (nNOS) at micromolar concentrations. Acts by a non-competitive mechanism, probably by binding to calcium/calmodulin and as a consequence blocking calmodulin attachment to nNOS. In Nyctimystes infrafrenatus (White-lipped tree frog), this protein is Frenatin-3.